Consider the following 618-residue polypeptide: MADEGKSYNEHDDRVSFPQRRKKGRGPFRWKCGEGNRRSGRGGSGVQSSRFEEDDGDVAMNDPQDGPRVRYNPYTNRPNRRGDGWHDRDRIHITVRRDRAPAERGGAGTSQDGTTKNWFKITIPYGRKYDKTWLLSMIQSKCSVPFNPIEFHYENTRAHFFVEDATTASALKGVNHKIQDRENRRISIIINASAPPYTVQNELKPEQIEQLKLIMSKRYDGNQQALDLKGLRSDPDLVAQNIDVVLNRRSCMAATLRIIEENIPELLSLNLSSNRLYKLDDMSSIVQKAPNLKTLNLSGNELKTERELDKIKGLKLEELWLDRNPMCDNFGDQSSYISAIRERFPKLLRLDGHELPPPISFDVEAPTMLPPCKGSYFGTENLKSLVLRFLQQYYVIYDSGDRQGLLYAYHDGACCSLSIPYNPQNPVRKNLAEYVKDSRNVKKLKEPTQRFRLLKHTRLNVVAFLNELPKTQHDVNAFVVDISAQTSTLLCFSVNGVFKEVDGKSRDSLRAFTRTFIAVPASNSGLCIVNDELFVRNASPEEIQRAFAMSAPTPSSSPVPTLSPEQQEMLQAFSTQSGMNLEWSQKCLQDNNWDYTRSAQAFTLLKAKGEIPEVAFMK.

Residues 1 to 15 (MADEGKSYNEHDDRV) are compositionally biased toward basic and acidic residues. The segment at 1–113 (MADEGKSYNE…RGGAGTSQDG (113 aa)) is disordered. At Ala2 the chain carries N-acetylalanine. A minor non-specific RNA-binding region spans residues 2–59 (ADEGKSYNEHDDRVSFPQRRKKGRGPFRWKCGEGNRRSGRGGSGVQSSRFEEDDGDVA). The RNA-binding (RBD) stretch occupies residues 2–117 (ADEGKSYNEH…GTSQDGTTKN (116 aa)). The interaction with ALYREF/THOC4 and LUZP4 stretch occupies residues 2-197 (ADEGKSYNEH…IIINASAPPY (196 aa)). Residues 19-28 (QRRKKGRGPF) show a composition bias toward basic residues. Arg41 is modified (asymmetric dimethylarginine; alternate). Position 41 is an omega-N-methylarginine; alternate (Arg41). The interval 60 to 117 (MNDPQDGPRVRYNPYTNRPNRRGDGWHDRDRIHITVRRDRAPAERGGAGTSQDGTTKN) is major non-specific RNA-binding. The tract at residues 60-117 (MNDPQDGPRVRYNPYTNRPNRRGDGWHDRDRIHITVRRDRAPAERGGAGTSQDGTTKN) is RNA binding. Residues 66–99 (GPRVRYNPYTNRPNRRGDGWHDRDRIHITVRRDR) carry the Nuclear localization signal motif. Basic and acidic residues predominate over residues 80 to 102 (RRGDGWHDRDRIHITVRRDRAPA). The short motif at 82 to 109 (GDGWHDRDRIHITVRRDRAPAERGGAGT) is the Nuclear export signal element. The RRM domain occupies 118 to 197 (WFKITIPYGR…IIINASAPPY (80 aa)). Residue Tyr125 is modified to 3'-nitrotyrosine. LRR repeat units follow at residues 265–290 (ELLSLNLSSNRLYKLDDMSSIVQKAP), 291–314 (NLKTLNLSGNELKTERELDKIKGL), 315–342 (KLEELWLDRNPMCDNFGDQSSYISAIRE), and 343–370 (RFPKLLRLDGHELPPPISFDVEAPTMLP). An NTF2 domain is found at 385 to 535 (LVLRFLQQYY…LCIVNDELFV (151 aa)). A TAP-C domain is found at 564 to 618 (PEQQEMLQAFSTQSGMNLEWSQKCLQDNNWDYTRSAQAFTLLKAKGEIPEVAFMK).

This sequence belongs to the NXF family. Heterodimer (via NTF2 domain) with NXT1. The formation of NXF1-NXT1 heterodimers is required for the NXF1-mediated nuclear mRNA export. Forms a complex with RANBP2/NUP358, NXT1 and RANGAP1. Associates with the exon junction complex (EJC). Associates with the transcription/export (TREX) complex. Found in a mRNA complex with UPF3A and UPF3B. Found in a post-splicing complex with RBM8A, UPF1, UPF2, UPF3A, UPF3B and RNPS1. Interacts (via N-terminus) with DHX9 (via N-terminus); this interaction is direct and negatively regulates NXF1-mediated nuclear export of constitutive transport element (CTE)-containing cellular mRNAs. Interacts with FYTTD1/UIF. Interacts with EIF4A3. Interacts with NUP42. Interacts with ALYREF/THOC4. Interacts with CHTOP. Interacts with FRG1 (via N-terminus). Interacts with LUZP4. Interacts with FMR1; the interaction occurs in a mRNA-dependent and polyribosomes-independent manner in the nucleus. Interacts with CPSF6 (via N-terminus); this interaction is direct. Interacts with RBM15. Interacts with RBM15B. Interacts with MCM3AP; this interaction is not mediated by RNA. Interacts with DDX3X (via C-terminus); this interaction may be partly involved in DDX3X nuclear export and in NXF1 localization to stress granules. Interacts with PABPC1/PABP1. As to expression, expressed ubiquitously.

It is found in the nucleus. It localises to the nucleoplasm. Its subcellular location is the nucleus speckle. The protein resides in the cytoplasm. The protein localises to the nuclear pore complex. It is found in the nucleus envelope. It localises to the stress granule. Its function is as follows. Involved in the nuclear export of mRNA species bearing retroviral constitutive transport elements (CTE) and in the export of mRNA from the nucleus to the cytoplasm (TAP/NFX1 pathway). The NXF1-NXT1 heterodimer is involved in the export of HSP70 mRNA in conjunction with ALYREF/THOC4 and THOC5 components of the TREX complex. ALYREF/THOC4-bound mRNA is thought to be transferred to the NXF1-NXT1 heterodimer for export. Also involved in nuclear export of m6A-containing mRNAs: interaction between SRSF3 and YTHDC1 facilitates m6A-containing mRNA-binding to both SRSF3 and NXF1, promoting mRNA nuclear export. This is Nuclear RNA export factor 1 (Nxf1) from Mus musculus (Mouse).